Consider the following 317-residue polypeptide: Brain-specific serine protease 4 (317 aa).

The N-terminal stretch at methionine 1 to alanine 32 is a signal peptide. A Peptidase S1 domain is found at valine 50–glutamine 290. An N-linked (GlcNAc...) asparagine glycan is attached at asparagine 70. A disulfide bond links cysteine 75 and cysteine 91. Active-site charge relay system residues include histidine 90 and aspartate 141. 3 disulfide bridges follow: cysteine 175–cysteine 248, cysteine 208–cysteine 227, and cysteine 238–cysteine 266. The Charge relay system role is filled by serine 242.

This sequence belongs to the peptidase S1 family. As to expression, expressed abundantly in the epithelial cells of the airways, including trachea, esophagus and fetal lung. Scarce in adult lung. Expressed at low levels in placenta, pancreas, prostate and thyroid gland.

It localises to the secreted. Its function is as follows. Preferentially cleaves the synthetic substrate H-D-Leu-Thr-Arg-pNA compared to tosyl-Gly-Pro-Arg-pNA. The chain is Brain-specific serine protease 4 (PRSS22) from Homo sapiens (Human).